Here is a 180-residue protein sequence, read N- to C-terminus: Large ribosomal subunit protein uL5c (180 aa).

Belongs to the universal ribosomal protein uL5 family. As to quaternary structure, part of the 50S ribosomal subunit; contacts the 5S rRNA.

It localises to the plastid. The protein resides in the chloroplast. In terms of biological role, binds 5S rRNA, forms part of the central protuberance of the 50S subunit. The protein is Large ribosomal subunit protein uL5c (rpl5) of Oedogonium cardiacum (Filamentous green alga).